We begin with the raw amino-acid sequence, 425 residues long: Intermediate conductance calcium-activated potassium channel protein 4 (425 aa).

Residues 30–50 form a helical membrane-spanning segment; it reads LVLAGTGIGLMVLHAEMLWFL. A helical membrane pass occupies residues 59–79; it reads LLVKCLITLSTAFLLCLIVVF. A helical membrane pass occupies residues 105–121; sequence VAQILLELLVCGVHPVP. Residues 141 to 161 traverse the membrane as a helical segment; sequence GFLGEGEALLSLAMLLRLYLV. A helical membrane pass occupies residues 205-225; the sequence is LLLGLTLGLWLTTAWVLSVAE. An intramembrane region (pore-forming) is located at residues 239–259; the sequence is LWLIPITFLTIGYGDVVPGTL. A helical membrane pass occupies residues 263–283; that stretch reads IVCLCTGVMGVCCTALLVAVV. Residues 284 to 345 are calmodulin-binding; sequence ARKLEFNKAE…RRHQRKMLAA (62 aa). At H356 the chain carries Phosphohistidine.

The protein belongs to the potassium channel KCNN family. KCa3.1/KCNN4 subfamily. Homodimer. Homotetramer. Heterotetramer of potassium channel proteins. Interacts with MTMR6; this interaction leads to selective dephosphorylation of PI(3)P in a lipid microdomain adjacent to KCNN4, resulting in a decrease of intermediate conductance calcium-activated potassium channel activity. Interacts (via the C-tail domain) with CALM1; the calmodulin binding is constitutive, does not require calcium and mediates calcium-dependent gating and four calmodulin molecules bind to one channel tetramer. Phosphorylation at His-356 by NDKB activates the intermediate conductance calcium-activated potassium channel activity, and conversely it's dephosphorylation by PHPT1 inhibits this activity.

It is found in the cell membrane. Its subcellular location is the cell projection. The protein resides in the ruffle membrane. It catalyses the reaction K(+)(in) = K(+)(out). Its function is as follows. Intermediate conductance calcium-activated potassium channel that mediates the voltage-independent transmembrane transfer of potassium across the cell membrane through a constitutive interaction with calmodulin which binds the intracellular calcium allowing its opening. The current is characterized by a voltage-independent activation, an intracellular calcium concentration increase-dependent activation and a single-channel conductance of about 25 picosiemens. Also presents an inwardly rectifying current, thus reducing its already small outward conductance of potassium ions, which is particularly the case when the membrane potential displays positive values, above + 20 mV. Controls calcium influx during vascular contractility by being responsible of membrane hyperpolarization induced by vasoactive factors in proliferative vascular smooth muscle cell types. Following calcium influx, the consecutive activation of KCNN4 channel leads to a hyperpolarization of the cell membrane potential and hence an increase of the electrical driving force for further calcium influx promoting sustained calcium entry in response to stimulation with chemotactic peptides. Required for maximal calcium influx and proliferation during the reactivation of naive T-cells. Plays a role in the late stages of EGF-induced macropinocytosis through activation by PI(3)P. This chain is Intermediate conductance calcium-activated potassium channel protein 4, found in Rattus norvegicus (Rat).